We begin with the raw amino-acid sequence, 85 residues long: Kappa-theraphotoxin-Gr1a (85 aa).

Positions 1–21 (MKTSVFAAILGLALFAVLCSG) are cleaved as a signal peptide. The propeptide occupies 22 to 49 (SELQEKDLKETLLSAIMETALEAQPEER). 3 disulfides stabilise this stretch: C51–C65, C58–C70, and C64–C77. Positions 53-55 (YLF) are involved in active face.

The protein belongs to the neurotoxin 10 (Hwtx-1) family. 09 (HaTx) subfamily. Expressed by the venom gland.

It is found in the secreted. Its function is as follows. Inhibits Kv2.1/KCNB1 and Kv4.2/KCND2 voltage-gated potassium channels. Acts as a gating modifier by shifting channel openings to more depolarized voltages and acts via the occupancy of multiple binding sites on the channel. The toxin binding sites are situated on the S3-S4 extracellular linker of the channel. At least two hanatoxin molecules can occupy the Kv2.1/KCNB1 channel, and maybe more (three or four). Can also inhibit calcium channels (Cav2.1/CACNA1A). Needs to partition into the membrane in order to bind to the channel. The polypeptide is Kappa-theraphotoxin-Gr1a (Grammostola rosea (Chilean rose tarantula)).